The sequence spans 324 residues: Ribonucleoside-diphosphate reductase subunit beta nrdF2 (324 aa).

Residues Glu-103 and His-106 each coordinate Fe cation. The active site involves Tyr-110. Glu-163, Glu-197, and His-200 together coordinate Fe cation.

The protein belongs to the ribonucleoside diphosphate reductase small chain family. As to quaternary structure, tetramer of two alpha and two beta subunits. Fe cation is required as a cofactor.

It catalyses the reaction a 2'-deoxyribonucleoside 5'-diphosphate + [thioredoxin]-disulfide + H2O = a ribonucleoside 5'-diphosphate + [thioredoxin]-dithiol. In terms of biological role, provides the precursors necessary for DNA synthesis. Catalyzes the biosynthesis of deoxyribonucleotides from the corresponding ribonucleotides. In Mycobacterium tuberculosis (strain CDC 1551 / Oshkosh), this protein is Ribonucleoside-diphosphate reductase subunit beta nrdF2 (nrdF2).